The chain runs to 490 residues: Dual specificity protein kinase CLK3 (490 aa).

Residues 1–138 (MHHCKRYRSP…SKRSSRSVED (138 aa)) form a disordered region. Y7 carries the phosphotyrosine modification. 6 positions are modified to phosphoserine: S9, S49, S51, S67, S76, and S78. 2 stretches are compositionally biased toward basic and acidic residues: residues 26–56 (YSRE…DRIP) and 63–76 (EHRD…EERS). Residues 88–116 (RSRHRRRSRERGPYRTRKHAHHCHKRRTR) are compositionally biased toward basic residues. Residues 117 to 130 (SCSSASSRSQQSSK) are compositionally biased toward low complexity. S135 is subject to Phosphoserine. Residues 156 to 472 (YEIVGNLGEG…LAEALLHPFF (317 aa)) form the Protein kinase domain. ATP is bound by residues 162–170 (LGEGTFGKV) and K186. The active-site Proton acceptor is D283.

Belongs to the protein kinase superfamily. CMGC Ser/Thr protein kinase family. Lammer subfamily. In terms of processing, autophosphorylates on all three types of residues.

The protein resides in the nucleus. It is found in the cytoplasm. Its subcellular location is the cytoplasmic vesicle. It localises to the secretory vesicle. The protein localises to the acrosome. The catalysed reaction is L-seryl-[protein] + ATP = O-phospho-L-seryl-[protein] + ADP + H(+). It carries out the reaction L-threonyl-[protein] + ATP = O-phospho-L-threonyl-[protein] + ADP + H(+). It catalyses the reaction L-tyrosyl-[protein] + ATP = O-phospho-L-tyrosyl-[protein] + ADP + H(+). Leucettine L41 inhibits its kinase activity and affects the regulation of alternative splicing mediated by phosphorylation of SR proteins. Dual specificity kinase acting on both serine/threonine and tyrosine-containing substrates. Phosphorylates serine- and arginine-rich (SR) proteins of the spliceosomal complex. May be a constituent of a network of regulatory mechanisms that enable SR proteins to control RNA splicing and can cause redistribution of SR proteins from speckles to a diffuse nucleoplasmic distribution. Phosphorylates SRSF1 and SRSF3. Regulates the alternative splicing of tissue factor (F3) pre-mRNA in endothelial cells. In Rattus norvegicus (Rat), this protein is Dual specificity protein kinase CLK3 (Clk3).